Here is a 141-residue protein sequence, read N- to C-terminus: Nucleoside diphosphate kinase (141 aa).

ATP contacts are provided by lysine 11, phenylalanine 59, arginine 87, threonine 93, arginine 104, and asparagine 114. Residue histidine 117 is the Pros-phosphohistidine intermediate of the active site.

The protein belongs to the NDK family. In terms of assembly, homotetramer. It depends on Mg(2+) as a cofactor.

The protein localises to the cytoplasm. It catalyses the reaction a 2'-deoxyribonucleoside 5'-diphosphate + ATP = a 2'-deoxyribonucleoside 5'-triphosphate + ADP. The enzyme catalyses a ribonucleoside 5'-diphosphate + ATP = a ribonucleoside 5'-triphosphate + ADP. Major role in the synthesis of nucleoside triphosphates other than ATP. The ATP gamma phosphate is transferred to the NDP beta phosphate via a ping-pong mechanism, using a phosphorylated active-site intermediate. The protein is Nucleoside diphosphate kinase of Legionella pneumophila subsp. pneumophila (strain Philadelphia 1 / ATCC 33152 / DSM 7513).